Consider the following 244-residue polypeptide: DNA repair protein RecO (244 aa).

It belongs to the RecO family.

Its function is as follows. Involved in DNA repair and RecF pathway recombination. This Caldicellulosiruptor bescii (strain ATCC BAA-1888 / DSM 6725 / KCTC 15123 / Z-1320) (Anaerocellum thermophilum) protein is DNA repair protein RecO.